A 231-amino-acid polypeptide reads, in one-letter code: Lipoprotein-releasing system ATP-binding protein LolD (231 aa).

The ABC transporter domain maps to 6–230 (LSCKNVSKKY…DGELELVINS (225 aa)). 42–49 (GLSGSGKT) lines the ATP pocket.

The protein belongs to the ABC transporter superfamily. Lipoprotein translocase (TC 3.A.1.125) family. As to quaternary structure, the complex is composed of two ATP-binding proteins (LolD) and two transmembrane proteins (LolC and LolE).

The protein resides in the cell inner membrane. Part of the ABC transporter complex LolCDE involved in the translocation of mature outer membrane-directed lipoproteins, from the inner membrane to the periplasmic chaperone, LolA. Responsible for the formation of the LolA-lipoprotein complex in an ATP-dependent manner. This is Lipoprotein-releasing system ATP-binding protein LolD from Francisella tularensis subsp. holarctica (strain OSU18).